A 354-amino-acid chain; its full sequence is MNGTEGENFYVPMSNKTGVVRSPFDYPQYYLGEPWMFSALAAYMFFLILTGLPVNFLTLFVTIQHKKLRQPLNYILLNLAVSDLFMVFGGFTTTIITSMNGYFIFGPAGCNFEGFFATLGGEVGLWCLVVLAIERYMVVCKPMANFRFGSQHAIIGVVFTWIMALSCAGPPLVGWSRYIPEGLQCSCGVDYYTMKPEVNNESFVIYMFVVHFTIPLIVIFFCYGRLVCTVKEAAAQQQESESTQRAEREVTRMVIIMVVAFLICWVPYASVAFYIFINQGCDFTPFFMTVPAFFAKSSAVYNPLIYILMNKQFRNCMITTICLGKNPFEEEESTSASASKTEASSVSSSQVAPA.

The Extracellular portion of the chain corresponds to 1–36 (MNGTEGENFYVPMSNKTGVVRSPFDYPQYYLGEPWM). Asn-2 and Asn-15 each carry an N-linked (GlcNAc...) asparagine glycan. The chain crosses the membrane as a helical span at residues 37–61 (FSALAAYMFFLILTGLPVNFLTLFV). The Cytoplasmic portion of the chain corresponds to 62–73 (TIQHKKLRQPLN). A helical membrane pass occupies residues 74–96 (YILLNLAVSDLFMVFGGFTTTII). Topologically, residues 97–110 (TSMNGYFIFGPAGC) are extracellular. A disulfide bridge links Cys-110 with Cys-187. A helical membrane pass occupies residues 111–133 (NFEGFFATLGGEVGLWCLVVLAI). The 'Ionic lock' involved in activated form stabilization motif lies at 134-136 (ERY). The Cytoplasmic segment spans residues 134 to 152 (ERYMVVCKPMANFRFGSQH). The chain crosses the membrane as a helical span at residues 153–173 (AIIGVVFTWIMALSCAGPPLV). Topologically, residues 174 to 202 (GWSRYIPEGLQCSCGVDYYTMKPEVNNES) are extracellular. Residues 203–224 (FVIYMFVVHFTIPLIVIFFCYG) traverse the membrane as a helical segment. Topologically, residues 225 to 252 (RLVCTVKEAAAQQQESESTQRAEREVTR) are cytoplasmic. Residues 253-274 (MVIIMVVAFLICWVPYASVAFY) traverse the membrane as a helical segment. Residues 275–286 (IFINQGCDFTPF) are Extracellular-facing. Residues 287–308 (FMTVPAFFAKSSAVYNPLIYIL) form a helical membrane-spanning segment. At Lys-296 the chain carries N6-(retinylidene)lysine. The Cytoplasmic portion of the chain corresponds to 309 to 354 (MNKQFRNCMITTICLGKNPFEEEESTSASASKTEASSVSSSQVAPA). Cys-322 is lipidated: S-palmitoyl cysteine. The tract at residues 333–354 (STSASASKTEASSVSSSQVAPA) is disordered. The span at 334 to 354 (TSASASKTEASSVSSSQVAPA) shows a compositional bias: low complexity.

It belongs to the G-protein coupled receptor 1 family. Opsin subfamily. Phosphorylated on some or all of the serine and threonine residues present in the C-terminal region. In terms of processing, contains one covalently linked retinal chromophore.

It localises to the membrane. The protein resides in the cell projection. Its subcellular location is the cilium. The protein localises to the photoreceptor outer segment. In terms of biological role, photoreceptor required for image-forming vision at low light intensity. While most salt water fish species use retinal as chromophore, most freshwater fish use 3-dehydroretinal, or a mixture of retinal and 3-dehydroretinal. Light-induced isomerization of 11-cis to all-trans retinal triggers a conformational change that activates signaling via G-proteins. Subsequent receptor phosphorylation mediates displacement of the bound G-protein alpha subunit by arrestin and terminates signaling. The sequence is that of Rhodopsin (rho) from Leucoraja erinaceus (Little skate).